A 576-amino-acid chain; its full sequence is Protein O-linked-mannose beta-1,4-N-acetylglucosaminyltransferase 2 (576 aa).

Over 1-4 (MNIS) the chain is Cytoplasmic. Residues 5–25 (AVFNALLVSIMAAVLWKHVKL) form a helical; Signal-anchor for type II membrane protein membrane-spanning segment. Residues 26–576 (LEQFYVIEEE…PFAEVLVCNT (551 aa)) are Lumenal-facing. 6 N-linked (GlcNAc...) asparagine glycosylation sites follow: Asn-98, Asn-275, Asn-335, Asn-451, Asn-539, and Asn-561. The Fibronectin type-III domain maps to 482 to 576 (RESKCQASAQ…PFAEVLVCNT (95 aa)).

The protein belongs to the glycosyltransferase 61 family.

The protein resides in the endoplasmic reticulum membrane. It catalyses the reaction 3-O-(alpha-D-mannosyl)-L-threonyl-[protein] + UDP-N-acetyl-alpha-D-glucosamine = 3-O-(N-acetyl-beta-D-glucosaminyl-(1-&gt;4)-alpha-D-mannosyl)-L-threonyl-[protein] + UDP + H(+). It participates in protein modification; protein glycosylation. In terms of biological role, O-linked mannose beta-1,4-N-acetylglucosaminyltransferase that transfers UDP-N-acetyl-D-glucosamine to the 4-position of the mannose to generate N-acetyl-D-glucosamine-beta-1,4-O-D-mannosylprotein. Involved in the biosynthesis of the phosphorylated O-mannosyl trisaccharide (N-acetylgalactosamine-beta-3-N-acetylglucosamine-beta-4-(phosphate-6-)mannose), a carbohydrate structure present in alpha-dystroglycan (DAG1), which is required for binding laminin G-like domain-containing extracellular proteins with high affinity. The sequence is that of Protein O-linked-mannose beta-1,4-N-acetylglucosaminyltransferase 2 (pomgnt2) from Xenopus tropicalis (Western clawed frog).